Here is a 122-residue protein sequence, read N- to C-terminus: Large ribosomal subunit protein uL14 (122 aa).

This sequence belongs to the universal ribosomal protein uL14 family. Part of the 50S ribosomal subunit. Forms a cluster with proteins L3 and L19. In the 70S ribosome, L14 and L19 interact and together make contacts with the 16S rRNA in bridges B5 and B8.

In terms of biological role, binds to 23S rRNA. Forms part of two intersubunit bridges in the 70S ribosome. The polypeptide is Large ribosomal subunit protein uL14 (Methylorubrum populi (strain ATCC BAA-705 / NCIMB 13946 / BJ001) (Methylobacterium populi)).